We begin with the raw amino-acid sequence, 253 residues long: uncharacterized protein (253 aa).

NADP(+)-binding residues include isoleucine 17, serine 36, aspartate 62, asparagine 89, tyrosine 158, lysine 162, valine 191, and threonine 193. The Proton donor role is filled by tyrosine 158. Lysine 162 functions as the Lowers pKa of active site Tyr in the catalytic mechanism.

It belongs to the short-chain dehydrogenases/reductases (SDR) family.

The protein localises to the cytoplasm. It localises to the nucleus. This is an uncharacterized protein from Schizosaccharomyces pombe (strain 972 / ATCC 24843) (Fission yeast).